We begin with the raw amino-acid sequence, 3707 residues long: Basement membrane-specific heparan sulfate proteoglycan core protein (3707 aa).

A signal peptide spans methionine 1–alanine 21. 3 O-linked (Xyl...) (heparan sulfate) serine glycosylation sites follow: serine 65, serine 71, and serine 76. An SEA domain is found at glutamine 80 to threonine 191. Residue asparagine 89 is glycosylated (N-linked (GlcNAc...) asparagine). 4 LDL-receptor class A domains span residues phenylalanine 195–cysteine 234, glycine 281–cysteine 319, alanine 320–cysteine 359, and serine 360–cysteine 403. Intrachain disulfides connect cysteine 199–cysteine 212, cysteine 206–cysteine 225, cysteine 219–cysteine 234, cysteine 285–cysteine 297, cysteine 292–cysteine 310, cysteine 304–cysteine 319, cysteine 325–cysteine 337, cysteine 332–cysteine 350, cysteine 344–cysteine 359, cysteine 368–cysteine 381, cysteine 375–cysteine 394, cysteine 388–cysteine 403, and cysteine 428–cysteine 479. The N-linked (GlcNAc...) asparagine glycan is linked to asparagine 358. The Ig-like C2-type 1 domain maps to methionine 404–proline 504. The Laminin EGF-like 1; first part domain occupies cysteine 521–cysteine 530. The region spanning aspartate 538–glutamate 730 is the Laminin IV type A 1 domain. A glycan (N-linked (GlcNAc...) asparagine) is linked at asparagine 554. One can recognise a Laminin EGF-like 1; second part domain in the interval cysteine 731–glycine 763. 11 disulfide bridges follow: cysteine 764–cysteine 773, cysteine 766–cysteine 780, cysteine 783–cysteine 792, cysteine 795–cysteine 811, cysteine 814–cysteine 829, cysteine 816–cysteine 839, cysteine 842–cysteine 851, cysteine 854–cysteine 869, cysteine 879–cysteine 892, cysteine 894–cysteine 903, and cysteine 906–cysteine 921. Laminin EGF-like domains lie at cysteine 764–proline 813 and cysteine 814–proline 871. The Laminin EGF-like 4; truncated domain maps to cysteine 879–lysine 923. The 10-residue stretch at cysteine 924–cysteine 933 folds into the Laminin EGF-like 5; first part domain. The Laminin IV type A 2 domain occupies alanine 941 to glutamine 1125. The Laminin EGF-like 5; second part domain maps to cysteine 1126–arginine 1158. Disulfide bonds link cysteine 1159–cysteine 1168, cysteine 1161–cysteine 1175, cysteine 1178–cysteine 1187, cysteine 1190–cysteine 1206, cysteine 1209–cysteine 1224, cysteine 1211–cysteine 1234, cysteine 1237–cysteine 1246, cysteine 1249–cysteine 1263, cysteine 1275–cysteine 1287, cysteine 1277–cysteine 1293, cysteine 1295–cysteine 1304, and cysteine 1307–cysteine 1322. Laminin EGF-like domains follow at residues cysteine 1159–proline 1208, cysteine 1209–arginine 1265, and cysteine 1275–proline 1324. The Laminin EGF-like 9; first part domain occupies cysteine 1325 to cysteine 1334. Residues isoleucine 1344–glutamate 1529 enclose the Laminin IV type A 3 domain. The region spanning cysteine 1530–leucine 1562 is the Laminin EGF-like 9; second part domain. 8 disulfide bridges follow: cysteine 1563/cysteine 1572, cysteine 1565/cysteine 1579, cysteine 1582/cysteine 1591, cysteine 1594/cysteine 1610, cysteine 1613/cysteine 1628, cysteine 1615/cysteine 1638, cysteine 1641/cysteine 1650, and cysteine 1653/cysteine 1668. Laminin EGF-like domains follow at residues cysteine 1563–proline 1612 and cysteine 1613–proline 1670. Ig-like C2-type domains follow at residues glutamate 1677–methionine 1771, valine 1772–proline 1865, valine 1866–glycine 1954, proline 1955–alanine 2049, serine 2050–valine 2148, proline 2149–glycine 2244, leucine 2245–serine 2343, proline 2344–valine 2436, serine 2437–threonine 2532, proline 2533–proline 2619, proline 2620–threonine 2720, proline 2721–serine 2809, valine 2810–alanine 2895, and leucine 2896–proline 2980. A disordered region spans residues aspartate 1713 to proline 1733. Disulfide bonds link cysteine 1792-cysteine 1839, cysteine 1886-cysteine 1932, and cysteine 1976-cysteine 2021. The disordered stretch occupies residues serine 2039 to serine 2061. Low complexity predominate over residues alanine 2052–serine 2061. 3 cysteine pairs are disulfide-bonded: cysteine 2073-cysteine 2118, cysteine 2170-cysteine 2215, and cysteine 2268-cysteine 2313. Residues asparagine 2336, asparagine 2394, and asparagine 2427 are each glycosylated (N-linked (GlcNAc...) asparagine). Cysteine 2365 and cysteine 2413 are disulfide-bonded. Cystine bridges form between cysteine 2456/cysteine 2506 and cysteine 2554/cysteine 2599. A glycan (N-linked (GlcNAc...) asparagine) is linked at asparagine 2600. Cysteines 2641 and 2686 form a disulfide. 2 disulfides stabilise this stretch: cysteine 2831–cysteine 2876 and cysteine 2917–cysteine 2962. The 179-residue stretch at isoleucine 2984–histidine 3162 folds into the Laminin G-like 1 domain. 2 N-linked (GlcNAc...) asparagine glycosylation sites follow: asparagine 3098 and asparagine 3154. 5 cysteine pairs are disulfide-bonded: cysteine 3137–cysteine 3163, cysteine 3166–cysteine 3177, cysteine 3171–cysteine 3187, cysteine 3204–cysteine 3216, and cysteine 3229–cysteine 3238. Residues cysteine 3163–glycine 3241 form the EGF-like domain. A Laminin G-like 2 domain is found at threonine 3245 to cysteine 3425. Residue asparagine 3385 is glycosylated (N-linked (GlcNAc...) asparagine). 7 disulfide bridges follow: cysteine 3393–cysteine 3419, cysteine 3425–cysteine 3436, cysteine 3430–cysteine 3446, cysteine 3448–cysteine 3457, cysteine 3464–cysteine 3476, cysteine 3470–cysteine 3481, and cysteine 3483–cysteine 3492. O-linked (Xyl...) (chondroitin sulfate) serine glycosylation occurs at serine 3510. A Laminin G-like 3 domain is found at glutamine 3518–cysteine 3705. 2 residues coordinate Ca(2+): aspartate 3574 and leucine 3591. The mediates motor neuron attachment stretch occupies residues leucine 3615–glutamate 3617. Alanine 3641 and asparagine 3643 together coordinate Ca(2+). An intrachain disulfide couples cysteine 3671 to cysteine 3705. The tract at residues alanine 3680–serine 3707 is disordered.

Has a strong tendency to aggregate in dimers or stellate structures. Interacts with other basement membrane components such as laminin, prolargin and collagen type IV. Interacts with COL13A1. Interacts with FGFBP1. Interacts with VWA1. Interacts (via C-terminus) with ECM1 (via C-terminus). Interacts with SVEP1. Post-translationally, proteolytic processing produces the C-terminal angiogenic peptide, endorepellin. This peptide can be further processed to produce the LG3 peptide. O-glycosylated. Contains three heparan sulfate chains. Also contains chondroitin sulfate.

The protein localises to the secreted. The protein resides in the extracellular space. It is found in the extracellular matrix. Its subcellular location is the basement membrane. In terms of biological role, integral component of basement membranes. Component of the glomerular basement membrane (GBM), responsible for the fixed negative electrostatic membrane charge, and which provides a barrier which is both size- and charge-selective. It serves as an attachment substrate for cells. Plays essential roles in vascularization. Critical for normal heart development and for regulating the vascular response to injury. Also required for avascular cartilage development. Its function is as follows. Anti-angiogenic and anti-tumor peptide that inhibits endothelial cell migration, collagen-induced endothelial tube morphogenesis and blood vessel growth in the chorioallantoic membrane. Blocks endothelial cell adhesion to fibronectin and type I collagen. Anti-tumor agent in neovascularization. Interaction with its ligand, integrin alpha2/beta1, is required for the anti-angiogenic properties. Evokes a reduction in phosphorylation of receptor tyrosine kinases via alpha2/beta1 integrin-mediated activation of the tyrosine phosphatase, PTPN6. Functionally, has anti-angiogenic properties that require binding of calcium ions for full activity. In Mus musculus (Mouse), this protein is Basement membrane-specific heparan sulfate proteoglycan core protein (Hspg2).